The chain runs to 130 residues: Small ribosomal subunit protein uS11 (130 aa).

The interval 109–130 (EDITPIPHDGTGRPGGKRGRRV) is disordered.

Belongs to the universal ribosomal protein uS11 family. In terms of assembly, part of the 30S ribosomal subunit.

Located on the platform of the 30S subunit. The chain is Small ribosomal subunit protein uS11 from Methanobrevibacter smithii (strain ATCC 35061 / DSM 861 / OCM 144 / PS).